A 229-amino-acid chain; its full sequence is Urease accessory protein UreF (229 aa).

It belongs to the UreF family. UreD, UreF and UreG form a complex that acts as a GTP-hydrolysis-dependent molecular chaperone, activating the urease apoprotein by helping to assemble the nickel containing metallocenter of UreC. The UreE protein probably delivers the nickel.

The protein localises to the cytoplasm. Functionally, required for maturation of urease via the functional incorporation of the urease nickel metallocenter. The polypeptide is Urease accessory protein UreF (Staphylococcus epidermidis (strain ATCC 35984 / DSM 28319 / BCRC 17069 / CCUG 31568 / BM 3577 / RP62A)).